A 390-amino-acid polypeptide reads, in one-letter code: Trehalose-phosphate phosphatase (390 aa).

D150 acts as the Nucleophile in catalysis. Residues D150, D152, and D333 each coordinate Mg(2+). 150-152 (DFD) provides a ligand contact to substrate.

Belongs to the trehalose phosphatase family. The cofactor is Mg(2+).

The catalysed reaction is alpha,alpha-trehalose 6-phosphate + H2O = alpha,alpha-trehalose + phosphate. It functions in the pathway glycan biosynthesis; trehalose biosynthesis. Removes the phosphate from trehalose 6-phosphate to produce free trehalose. The sequence is that of Trehalose-phosphate phosphatase (otsB) from Mycobacterium ulcerans (strain Agy99).